A 410-amino-acid chain; its full sequence is MTNKVSLDKSKIKFVLFEGVHQSALDTLHAAGYTNIDYYKKALDGDELKEAIKDVHFIGLRSRTHLTAEMIEAAPKLIAVGCFCIGTNQVDLNAAKARGIPVFNAPFSNTRSVAELVLGEILLLMRNVPQANAEVHRGVWNKSATGSHEVRGKKLGIIGYGHIGSQLSIIAESLGMDVYFYDIENKLPLGNAKQVRSLEELLSSCDVVSLHVPELPSTKNLMNVARIAQLKQGAILINAARGTVVDIDALAQALKDGKLQGAAIDVFPVEPASINEEFISPLREFDNVILTPHIGGSTAEAQENIGFEVAGKFVKYSDNGSTLSSVNFPEVSLPEHEGTKRLLHIHENRPGILNKLNQIFVEANLNIAAQYLQTDPKIGYVVVDVETNDASPLLTKLKEIDGTIRARVLY.

Residues 162–163 (HI), Asp182, 239–241 (AAR), and Asp265 each bind NAD(+). Arg241 is an active-site residue. The active site involves Glu270. His293 serves as the catalytic Proton donor. Position 293-296 (293-296 (HIGG)) interacts with NAD(+). Positions 341 to 410 (RLLHIHENRP…DGTIRARVLY (70 aa)) constitute an ACT domain.

The protein belongs to the D-isomer specific 2-hydroxyacid dehydrogenase family.

The enzyme catalyses (2R)-3-phosphoglycerate + NAD(+) = 3-phosphooxypyruvate + NADH + H(+). It catalyses the reaction (R)-2-hydroxyglutarate + NAD(+) = 2-oxoglutarate + NADH + H(+). It participates in amino-acid biosynthesis; L-serine biosynthesis; L-serine from 3-phospho-D-glycerate: step 1/3. Its activity is regulated as follows. In bacteria displays feedback inhibition by L-serine. Functionally, catalyzes the reversible oxidation of 3-phospho-D-glycerate to 3-phosphonooxypyruvate, the first step of the phosphorylated L-serine biosynthesis pathway. Also catalyzes the reversible oxidation of 2-hydroxyglutarate to 2-oxoglutarate. The sequence is that of D-3-phosphoglycerate dehydrogenase (serA) from Haemophilus influenzae (strain ATCC 51907 / DSM 11121 / KW20 / Rd).